Consider the following 347-residue polypeptide: Probable dual-specificity RNA methyltransferase RlmN (347 aa).

E91 acts as the Proton acceptor in catalysis. The 231-residue stretch at 97–327 folds into the Radical SAM core domain; it reads YKYGNSICVS…ATVRREMGSD (231 aa). An intrachain disulfide couples C104 to C332. [4Fe-4S] cluster-binding residues include C111, C115, and C118. Residues 158-159, S190, 213-215, and N289 contribute to the S-adenosyl-L-methionine site; these read GE and SLH. Catalysis depends on C332, which acts as the S-methylcysteine intermediate.

Belongs to the radical SAM superfamily. RlmN family. [4Fe-4S] cluster serves as cofactor.

It is found in the cytoplasm. It catalyses the reaction adenosine(2503) in 23S rRNA + 2 reduced [2Fe-2S]-[ferredoxin] + 2 S-adenosyl-L-methionine = 2-methyladenosine(2503) in 23S rRNA + 5'-deoxyadenosine + L-methionine + 2 oxidized [2Fe-2S]-[ferredoxin] + S-adenosyl-L-homocysteine. The catalysed reaction is adenosine(37) in tRNA + 2 reduced [2Fe-2S]-[ferredoxin] + 2 S-adenosyl-L-methionine = 2-methyladenosine(37) in tRNA + 5'-deoxyadenosine + L-methionine + 2 oxidized [2Fe-2S]-[ferredoxin] + S-adenosyl-L-homocysteine. Functionally, specifically methylates position 2 of adenine 2503 in 23S rRNA and position 2 of adenine 37 in tRNAs. This chain is Probable dual-specificity RNA methyltransferase RlmN, found in Clostridium perfringens (strain SM101 / Type A).